We begin with the raw amino-acid sequence, 127 residues long: V-type proton ATPase subunit F (127 aa).

This sequence belongs to the V-ATPase F subunit family. As to quaternary structure, V-ATPase is a heteromultimeric enzyme made up of two complexes: the ATP-hydrolytic V1 complex and the proton translocation V0 complex. The V1 complex consists of three catalytic AB heterodimers that form a heterohexamer, three peripheral stalks each consisting of EG heterodimers, one central rotor including subunits D and F, and the regulatory subunits C and H. The proton translocation complex V0 consists of the proton transport subunit a, a ring of proteolipid subunits c9c'', rotary subunit d, subunits e and f, and the accessory subunits VhaAC45 and ATP6AP2.

Its function is as follows. Subunit of the V1 complex of vacuolar(H+)-ATPase (V-ATPase), a multisubunit enzyme composed of a peripheral complex (V1) that hydrolyzes ATP and a membrane integral complex (V0) that translocates protons. V-ATPase is responsible for acidifying and maintaining the pH of intracellular compartments and in some cell types, is targeted to the plasma membrane, where it is responsible for acidifying the extracellular environment. In Aedes aegypti (Yellowfever mosquito), this protein is V-type proton ATPase subunit F.